Consider the following 299-residue polypeptide: Spermatocyte protein spe-11 (299 aa).

The segment at 1–38 (MSDEEIDISTALNNKTTPKKKSLKRNSNSQEGYESPEE) is disordered.

Expressed in mature sperm.

Its subcellular location is the cytoplasm. It localises to the perinuclear region. In terms of biological role, paternally sperm-supplied factor required for embryogenesis. Plays a role in preventing polyspermy possibly by promoting the formation of a continuous and cohesive eggshell chitin layer. The sequence is that of Spermatocyte protein spe-11 (spe-11) from Caenorhabditis elegans.